The primary structure comprises 220 residues: Iron-sulfur cluster repair protein YtfE (220 aa).

This sequence belongs to the RIC family. YtfE subfamily. In terms of assembly, homodimer.

It localises to the cytoplasm. Functionally, di-iron-containing protein involved in the repair of iron-sulfur clusters damaged by oxidative and nitrosative stress conditions. The chain is Iron-sulfur cluster repair protein YtfE from Escherichia coli O8 (strain IAI1).